The chain runs to 117 residues: Large ribosomal subunit protein bL20 (117 aa).

The protein belongs to the bacterial ribosomal protein bL20 family.

In terms of biological role, binds directly to 23S ribosomal RNA and is necessary for the in vitro assembly process of the 50S ribosomal subunit. It is not involved in the protein synthesizing functions of that subunit. In Helicobacter hepaticus (strain ATCC 51449 / 3B1), this protein is Large ribosomal subunit protein bL20.